A 774-amino-acid polypeptide reads, in one-letter code: Protein translocase subunit SecA 2 (774 aa).

Residues Q94, 112 to 116 (GEGKT), and D501 each bind ATP.

The protein belongs to the SecA family. Monomer and homodimer. Part of the essential Sec protein translocation apparatus which comprises SecA, SecYEG and auxiliary proteins SecDF. Other proteins may also be involved.

The protein resides in the cell membrane. It is found in the cytoplasm. The enzyme catalyses ATP + H2O + cellular proteinSide 1 = ADP + phosphate + cellular proteinSide 2.. Its function is as follows. Part of the Sec protein translocase complex. Interacts with the SecYEG preprotein conducting channel. Has a central role in coupling the hydrolysis of ATP to the transfer of proteins into and across the cell membrane, serving as an ATP-driven molecular motor driving the stepwise translocation of polypeptide chains across the membrane. In Mycobacterium sp. (strain JLS), this protein is Protein translocase subunit SecA 2.